The primary structure comprises 557 residues: Dihydroxy-acid dehydratase (557 aa).

Cys49 lines the [2Fe-2S] cluster pocket. Residue Asp81 coordinates Mg(2+). Residue Cys122 coordinates [2Fe-2S] cluster. Mg(2+)-binding residues include Asp123 and Lys124. Lys124 bears the N6-carboxylysine mark. Position 194 (Cys194) interacts with [2Fe-2S] cluster. A Mg(2+)-binding site is contributed by Glu446. Ser472 acts as the Proton acceptor in catalysis.

This sequence belongs to the IlvD/Edd family. In terms of assembly, homodimer. It depends on [2Fe-2S] cluster as a cofactor. Requires Mg(2+) as cofactor.

It carries out the reaction (2R)-2,3-dihydroxy-3-methylbutanoate = 3-methyl-2-oxobutanoate + H2O. It catalyses the reaction (2R,3R)-2,3-dihydroxy-3-methylpentanoate = (S)-3-methyl-2-oxopentanoate + H2O. The protein operates within amino-acid biosynthesis; L-isoleucine biosynthesis; L-isoleucine from 2-oxobutanoate: step 3/4. It functions in the pathway amino-acid biosynthesis; L-valine biosynthesis; L-valine from pyruvate: step 3/4. In terms of biological role, functions in the biosynthesis of branched-chain amino acids. Catalyzes the dehydration of (2R,3R)-2,3-dihydroxy-3-methylpentanoate (2,3-dihydroxy-3-methylvalerate) into 2-oxo-3-methylpentanoate (2-oxo-3-methylvalerate) and of (2R)-2,3-dihydroxy-3-methylbutanoate (2,3-dihydroxyisovalerate) into 2-oxo-3-methylbutanoate (2-oxoisovalerate), the penultimate precursor to L-isoleucine and L-valine, respectively. This Prochlorococcus marinus (strain MIT 9301) protein is Dihydroxy-acid dehydratase.